The chain runs to 1383 residues: Cell surface hyaluronidase (1383 aa).

The tract at residues 1–76 (MYAAGSRGHS…QRTPSESRKR (76 aa)) is disordered. Over 1–82 (MYAAGSRGHS…SRKRKRHKNT (82 aa)) the chain is Cytoplasmic. S10, S53, and S63 each carry phosphoserine. The chain crosses the membrane as a helical; Signal-anchor for type II membrane protein span at residues 83–103 (FICFAITSFSFFVALAVILGI). Residues 104–1383 (SSKYAPDENC…DLLQQALKVL (1280 aa)) are Extracellular-facing. A G8 domain is found at 121–245 (RNWDPGQDSA…QRTSWTMLAR (125 aa)). The GG-type lectin 1 domain occupies 255–412 (GSYAFEKDFS…ISLSGFRVDI (158 aa)). N-linked (GlcNAc...) asparagine glycosylation occurs at N292. PbH1 repeat units follow at residues 669–691 (HPNNHLINNAAAGSQDAGIWYLF), 711–733 (TPLGIFYNNRVHSNFKAGLFVDK), and 791–812 (GGDIIVQNSAFADNGKGLTFAS). N914 and N1234 each carry an N-linked (GlcNAc...) asparagine glycan. The region spanning 1208–1366 (KSYLPVRFQS…MEEYGCSRTG (159 aa)) is the GG-type lectin 2 domain.

The protein belongs to the CEMIP family. Ca(2+) is required as a cofactor. As to expression, widely expressed. Strongly expressed in endothelial cells in the subcapsular sinus of lymph nodes and in the liver sinusoid, two primary sites implicated in systemic hyaluronan turnover.

It localises to the cell membrane. It carries out the reaction Random hydrolysis of (1-&gt;4)-linkages between N-acetyl-beta-D-glucosamine and D-glucuronate residues in hyaluronate.. Cell surface hyaluronidase that mediates the initial cleavage of extracellular high-molecular-weight hyaluronan into intermediate-size hyaluronan of approximately 5 kDa fragments. Very specific to hyaluronan; not able to cleave chondroitin sulfate or dermatan sulfate. Has an essential function in systemic hyaluronan catabolism and turnover and regulates cell adhesion and migration via hyaluronan degradation at focal adhesion sites. Acts as a regulator of angiogenesis and heart morphogenesis by mediating degradation of extracellular hyaluronan, thereby regulating VEGF signaling. The sequence is that of Cell surface hyaluronidase from Mus musculus (Mouse).